We begin with the raw amino-acid sequence, 1007 residues long: MVSKMIIENFEALKSWLSKTLEPICDADPSALAKYVLALVKKDKSEKELKALCIDQLDVFLQKETQIFVEKLFDAVNTKSYLPPPEQPSSGSLKVEFFPHQEKDIKKEEITKEEEREKKFSRRLNHSPPQSSSRYRENRSRDERKKDDRSRKRDYDRNPPRRDSYRDRYNRRRGRSRSYSRSRSRSWSKERLRERDRDRSRTRSRSRTRSRERDLVKPKYDLDRTDPLENNYTPVSSVPSISSGHYPVPTLSSTITVIAPTHHGNNTTESWSEFHEDQVDHNSYVRPPMPKKRCRDYDEKGFCMRGDMCPFDHGSDPVVVEDVNLPGMLPFPAQPPVVEGPPPPGLPPPPPILTPPPVNLRPPVPPPGPLPPSLPPVTGPPPPLPPLQPSGMDAPPNSATSSVPTVVTTGIHHQPPPAPPSLFTADTYDTDGYNPEAPSITNTSRPMYRHRVHAQRPNLIGLTSGDMDLPPREKPPNKSSMRIVVDSESRKRTIGSGEPGVPTKKTWFDKPNFNRTNSPGFQKKVQFGNENTKLELRKVPPELNNISKLNEHFSRFGTLVNLQVAYNGDPEGALIQFATYEEAKKAISSTEAVLNNRFIKVYWHREGSTQQLQTTSPKVMQPLVQQPILPVVKQSVKERLGPVPSSTIEPAEAQSASSDLPQNVTKLSVKDRLGFVSKPSVSATEKVLSTSTGLTKTVYNPAALKAAQKTLLVSTSAVDNNEAQKKKQEALKLQQDVRKRKQEILEKHIETQKMLISKLEKNKTMKSEDKAEIMKTLEVLTKNITKLKDEVKAASPGRCLPKSIKTKTQMQKELLDTELDLYKKMQAGEEVTELRRKYTELQLEAAKRGILSSGRGRGIHSRGRGAVHGRGRGRGRGRGVPGHAVVDHRPRALEISAFTESDREDLLPHFAQYGEIEDCQIDDSSLHAVITFKTRAEAEAAAVHGARFKGQDLKLAWNKPVTNISAVETEEVEPDEEEFQEESLVDDSLLQDDDEEEEDNESRSWRR.

A Glycyl lysine isopeptide (Lys-Gly) (interchain with G-Cter in SUMO2) cross-link involves residue lysine 94. Lysine 106 participates in a covalent cross-link: Glycyl lysine isopeptide (Lys-Gly) (interchain with G-Cter in SUMO1); alternate. Residue lysine 106 forms a Glycyl lysine isopeptide (Lys-Gly) (interchain with G-Cter in SUMO2); alternate linkage. The span at 106–118 shows a compositional bias: basic and acidic residues; the sequence is KKEEITKEEEREK. A disordered region spans residues 106–241; the sequence is KKEEITKEEE…YTPVSSVPSI (136 aa). Position 127 is a phosphoserine (serine 127). The segment covering 134–168 has biased composition (basic and acidic residues); that stretch reads RYRENRSRDERKKDDRSRKRDYDRNPPRRDSYRDR. Positions 169-186 are enriched in basic residues; the sequence is YNRRRGRSRSYSRSRSRS. 2 stretches are compositionally biased toward basic and acidic residues: residues 187–201 and 209–227; these read WSKE…DRSR and RSRE…RTDP. Positions 228–241 are enriched in polar residues; sequence LENNYTPVSSVPSI. The segment at 288 to 316 adopts a C3H1-type zinc-finger fold; the sequence is PMPKKRCRDYDEKGFCMRGDMCPFDHGSD. Over residues 334–388 the composition is skewed to pro residues; the sequence is QPPVVEGPPPPGLPPPPPILTPPPVNLRPPVPPPGPLPPSLPPVTGPPPPLPPLQ. Disordered stretches follow at residues 334 to 404 and 460 to 519; these read QPPV…SSVP and IGLT…TNSP. Over residues 394–404 the composition is skewed to low complexity; sequence APPNSATSSVP. Position 496 is a phosphoserine (serine 496). Lysine 510 is modified (N6-acetyllysine). Position 518 is a phosphoserine (serine 518). Positions 532–606 constitute an RRM 1 domain; the sequence is TKLELRKVPP…RFIKVYWHRE (75 aa). Serine 616 is modified (phosphoserine). 2 coiled-coil regions span residues 719–795 and 823–847; these read DNNE…KAAS and KKMQ…EAAK. The tract at residues 853–884 is disordered; sequence SGRGRGIHSRGRGAVHGRGRGRGRGRGVPGHA. A compositionally biased stretch (basic residues) spans 857 to 877; that stretch reads RGIHSRGRGAVHGRGRGRGRG. Residues 891–960 enclose the RRM 2 domain; sequence RALEISAFTE…QDLKLAWNKP (70 aa). The tract at residues 966–1007 is disordered; that stretch reads AVETEEVEPDEEEFQEESLVDDSLLQDDDEEEEDNESRSWRR. The segment covering 968–1000 has biased composition (acidic residues); that stretch reads ETEEVEPDEEEFQEESLVDDSLLQDDDEEEEDN.

May be involved in the turnover of nuclear polyadenylated (pA+) RNA. The polypeptide is RNA-binding protein 26 (Homo sapiens (Human)).